The sequence spans 201 residues: Peptidyl-tRNA hydrolase (201 aa).

Y17 lines the tRNA pocket. Catalysis depends on H22, which acts as the Proton acceptor. TRNA-binding residues include F76, N78, and N124.

It belongs to the PTH family. In terms of assembly, monomer.

The protein localises to the cytoplasm. It catalyses the reaction an N-acyl-L-alpha-aminoacyl-tRNA + H2O = an N-acyl-L-amino acid + a tRNA + H(+). Its function is as follows. Hydrolyzes ribosome-free peptidyl-tRNAs (with 1 or more amino acids incorporated), which drop off the ribosome during protein synthesis, or as a result of ribosome stalling. Catalyzes the release of premature peptidyl moieties from peptidyl-tRNA molecules trapped in stalled 50S ribosomal subunits, and thus maintains levels of free tRNAs and 50S ribosomes. The sequence is that of Peptidyl-tRNA hydrolase from Oleidesulfovibrio alaskensis (strain ATCC BAA-1058 / DSM 17464 / G20) (Desulfovibrio alaskensis).